We begin with the raw amino-acid sequence, 736 residues long: Segment polarity protein dishevelled homolog DVL-2 (736 aa).

Residues 1–82 (MAETKVIYHL…RVVSWLASSE (82 aa)) enclose the DIX domain. The interval 79–241 (ASSEGSQPDS…PRLERTSSFS (163 aa)) is disordered. The span at 100 to 114 (EPPPPVPPPIPPPPA) shows a compositional bias: pro residues. Residues 149-160 (MRRDRVRRRESS) are compositionally biased toward basic and acidic residues. The segment covering 181–195 (ESSSTLLTSEIETSI) has biased composition (low complexity). Residues 205–217 (SRFSSSTEQSSAS) show a composition bias toward polar residues. A compositionally biased stretch (basic residues) spans 219-231 (LLKRHRRRRKQRP). One can recognise a PDZ domain in the interval 254-326 (TVTLNMEKYN…NDDAVRVLRD (73 aa)). Residues 327-427 (IVHKPGPIVL…LASVVKVMAS (101 aa)) form an interaction with custos region. Residues 428–502 (PESGLEVRDR…SEQCYYIFGD (75 aa)) enclose the DEP domain. Low complexity-rich tracts occupy residues 574–593 (MGSAGSQHSEGSRSSGSNRS) and 616–629 (KSGSGSESEYSTRS). Residues 574–664 (MGSAGSQHSE…HPPSVHSYAA (91 aa)) form a disordered region.

This sequence belongs to the DSH family. Can form homomultimers. Interacts with prickle1. Interacts (via PDZ domain) with ccdc88c/dal and dact1-B/dpr. Interacts (via DIX domain) with ARP/Axin-related protein and dact1-A/frodo. Interacts with sdc4, possibly via fz7. Interacts directly (via DEP domain) with efnb1/ephrin-B1 and indirectly with the phosphorylated ephrin receptors ephb1 and ephb2, via association with SH domain-containing adapters. May interact with lrrc6. Interacts with custos (via NLS1 and NLS2); the interaction is negatively regulated by Wnt stimulation. Phosphorylated. Phosphorylation is controlled by frizzled proteins, correlates with the onset of embryo dorsalizing events and is higher in the dorsal half of early cleavage embryos. Phosphorylated on tyrosine residues in response to association with efnb1/ephrin-B1. Expressed equally in both animal-vegetal and dorsal-ventral directions of the early blastula. Becomes enriched on the dorsal side of the embryo after cortical rotation. Expressed along the anterior margin of eye field of neurulae (stage 16 embryos) and in the anterolateral crescent that borders the eye field. Continues to be expressed in the optic cup at stage 26. Expressed in the central nervous system throughout the early tailbud stage including the entire hindbrain.

The protein localises to the cytoplasm. It is found in the cytoplasmic vesicle. Its subcellular location is the cell projection. It localises to the cilium. The protein resides in the nucleus. The protein localises to the cell membrane. Functionally, involved in at least 2 independent signaling cascades, controlling cell fate via canonical Wnt signaling and cell polarity via a planar cell polarity (PCP) cascade. Acts synergistically with dal/dapple-like to activate Wnt signaling, stabilizing ctnnb1/beta-catenin and leading to dorsal axis formation. Also prevents degradation of ctnnb1/beta-catenin by displacing gsk3 from a complex with ARP/Axin-related protein. Has an additional role in anterior-posterior (A/P) axis formation, specifying different neuroectodermal cell fates along the A/P axis in a dose-dependent manner by activating several early patterning genes. In the PCP pathway, required at the cell membrane for PCP-mediated neural and mesodermal convergent extension during gastrulation and subsequent neural tube closure, acting to activate jnk. Also involved in blastopore closure and archenteron elongation during early, but not late, gastrulation. Associates with ephrin receptors and ligands and acts as part of a downstream PCP pathway to mediate ephrin-mediated cell repulsion via activation of rhoa. Required for efnb1/ephrin-B1-driven movement of non-retinal progenitor cells into the retina during eye field formation. Patterns the hindbrain. Required for ciliogenesis. Controls the docking of basal bodies to the apical plasma membrane; mediates the activation, but not localization of rhoa at the apical surface of ciliated cells during basal body docking. Furthermore, required for the association of basal bodies with membrane-bound vesicles and the vesicle-trafficking protein exoc4/sec8, and this association is in turn required for basal body docking. Once basal bodies are docked, required for the planar polarization of basal bodies that underlies ciliary beating and the directional fluid flow across ciliated epithelia. The polypeptide is Segment polarity protein dishevelled homolog DVL-2 (dvl2) (Xenopus laevis (African clawed frog)).